A 130-amino-acid chain; its full sequence is Small ribosomal subunit protein uS11 (130 aa).

Belongs to the universal ribosomal protein uS11 family. In terms of assembly, part of the 30S ribosomal subunit. Interacts with proteins S7 and S18. Binds to IF-3.

Located on the platform of the 30S subunit, it bridges several disparate RNA helices of the 16S rRNA. Forms part of the Shine-Dalgarno cleft in the 70S ribosome. This is Small ribosomal subunit protein uS11 from Syntrophobacter fumaroxidans (strain DSM 10017 / MPOB).